The sequence spans 257 residues: Imidazole glycerol phosphate synthase subunit HisF (257 aa).

Active-site residues include aspartate 11 and aspartate 130.

Belongs to the HisA/HisF family. Heterodimer of HisH and HisF.

It is found in the cytoplasm. It catalyses the reaction 5-[(5-phospho-1-deoxy-D-ribulos-1-ylimino)methylamino]-1-(5-phospho-beta-D-ribosyl)imidazole-4-carboxamide + L-glutamine = D-erythro-1-(imidazol-4-yl)glycerol 3-phosphate + 5-amino-1-(5-phospho-beta-D-ribosyl)imidazole-4-carboxamide + L-glutamate + H(+). The protein operates within amino-acid biosynthesis; L-histidine biosynthesis; L-histidine from 5-phospho-alpha-D-ribose 1-diphosphate: step 5/9. Its function is as follows. IGPS catalyzes the conversion of PRFAR and glutamine to IGP, AICAR and glutamate. The HisF subunit catalyzes the cyclization activity that produces IGP and AICAR from PRFAR using the ammonia provided by the HisH subunit. This chain is Imidazole glycerol phosphate synthase subunit HisF, found in Actinobacillus succinogenes (strain ATCC 55618 / DSM 22257 / CCUG 43843 / 130Z).